Reading from the N-terminus, the 30-residue chain is uncharacterized protein (30 aa).

Residues 1 to 30 form a disordered region; the sequence is MHLSTLPNVPWPNRSFTTKRPPLPNMSFSW.

This is an uncharacterized protein from Saccharomyces cerevisiae (strain ATCC 204508 / S288c) (Baker's yeast).